Reading from the N-terminus, the 70-residue chain is QTWPPVEDRPHCKRCVACTLMWPPEANRCVCGDLVPKCHKGCSQCEKADTRSGRPLYKCLSFEYYNCAAD.

4 disulfides stabilise this stretch: Cys12-Cys31, Cys18-Cys29, Cys38-Cys45, and Cys42-Cys59.

The protein belongs to the Bowman-Birk serine protease inhibitor family. As to expression, expressed in bulb (at protein level).

In terms of biological role, serine protease inhibitor. Strongly inhibits trypsin (Ki = 7.1 nM) and almost completely inhibits elastase. Also inhibits chymotrypsin (Ki = 19 nM). Does not inhibit bacterial subtilisin. The protein is Bowman-Birk type proteinase inhibitor A7 of Hyacinthus orientalis (Common hyacinth).